The following is a 339-amino-acid chain: 2-keto-3-deoxygluconate permease (339 aa).

10 helical membrane passes run 10–30, 42–62, 77–97, 100–120, 141–161, 163–183, 199–219, 224–244, 254–274, and 289–309; these read IPGG…TFAP, GLIS…GASI, LVVT…RILP, GVEV…AMDM, AFVL…LGTA, IASF…VGFA, VQTL…LSVI, LLGV…LIVA, TAGI…VLIA, and TLVA…TAMW. A disordered region spans residues 315–339; it reads GGDGTVPKEDAVEEKAEQQRRRIIK. Basic and acidic residues predominate over residues 320–339; it reads VPKEDAVEEKAEQQRRRIIK.

The protein belongs to the KdgT transporter family.

The protein localises to the cell inner membrane. The catalysed reaction is 2-dehydro-3-deoxy-D-gluconate(in) + H(+)(in) = 2-dehydro-3-deoxy-D-gluconate(out) + H(+)(out). Its activity is regulated as follows. Uptake is inhibited by the protonophore uncouplers carbonyl cyanide m-chlorophenylhydrazone (CCCP) and 2,4-dinitrophenol, and by NaN(3). Catalyzes the proton-dependent uptake of 2-keto-3-deoxygluconate (KDG) into the cell. Can also mediate the uptake of glucuronate with a low affinity, and may mediate the uptake of 5-keto-4-deoxyuronate (DKI) and 2,5-diketo-3-deoxygluconate (DKII), which are intermediates in pectin degradation. The sequence is that of 2-keto-3-deoxygluconate permease from Dickeya chrysanthemi (Pectobacterium chrysanthemi).